Consider the following 316-residue polypeptide: Methionyl-tRNA formyltransferase (316 aa).

(6S)-5,6,7,8-tetrahydrofolate is bound at residue 112–115 (SLLP).

It belongs to the Fmt family.

It carries out the reaction L-methionyl-tRNA(fMet) + (6R)-10-formyltetrahydrofolate = N-formyl-L-methionyl-tRNA(fMet) + (6S)-5,6,7,8-tetrahydrofolate + H(+). Attaches a formyl group to the free amino group of methionyl-tRNA(fMet). The formyl group appears to play a dual role in the initiator identity of N-formylmethionyl-tRNA by promoting its recognition by IF2 and preventing the misappropriation of this tRNA by the elongation apparatus. In Actinobacillus pleuropneumoniae serotype 5b (strain L20), this protein is Methionyl-tRNA formyltransferase.